Consider the following 135-residue polypeptide: Thyrostimulin beta-5 subunit (135 aa).

Positions 1–19 (MVMPLVLSLALTPPPLCHA) are cleaved as a signal peptide. 5 disulfide bridges follow: Cys30/Cys87, Cys54/Cys102, Cys63/Cys118, Cys67/Cys120, and Cys123/Cys130.

The protein belongs to the glycoprotein hormones subunit beta family. As to quaternary structure, heterodimer with GPHA2; non-covalently-linked. Expressed by the venom duct.

The protein localises to the secreted. The protein is Thyrostimulin beta-5 subunit of Conus victoriae (Queen Victoria cone).